The following is a 677-amino-acid chain: Methionine--tRNA ligase (677 aa).

Positions Pro-15–His-25 match the 'HIGH' region motif. Zn(2+) contacts are provided by Cys-146, Cys-149, Cys-159, and Cys-162. The short motif at Lys-332–Ser-336 is the 'KMSKS' region element. Lys-335 contacts ATP. A tRNA-binding domain is found at Asp-576–Met-677.

Belongs to the class-I aminoacyl-tRNA synthetase family. MetG type 1 subfamily. Homodimer. Zn(2+) serves as cofactor.

Its subcellular location is the cytoplasm. The catalysed reaction is tRNA(Met) + L-methionine + ATP = L-methionyl-tRNA(Met) + AMP + diphosphate. Its function is as follows. Is required not only for elongation of protein synthesis but also for the initiation of all mRNA translation through initiator tRNA(fMet) aminoacylation. The polypeptide is Methionine--tRNA ligase (Idiomarina loihiensis (strain ATCC BAA-735 / DSM 15497 / L2-TR)).